Here is a 412-residue protein sequence, read N- to C-terminus: Multifunctional CCA protein (412 aa).

ATP-binding residues include glycine 8 and arginine 11. CTP is bound by residues glycine 8 and arginine 11. The Mg(2+) site is built by aspartate 21 and aspartate 23. ATP-binding residues include arginine 91, arginine 137, and arginine 140. Arginine 91, arginine 137, and arginine 140 together coordinate CTP. The HD domain maps to 228 to 329 (TGIHTLMTLS…VKLFDSIDAW (102 aa)).

It belongs to the tRNA nucleotidyltransferase/poly(A) polymerase family. Bacterial CCA-adding enzyme type 1 subfamily. As to quaternary structure, monomer. Can also form homodimers and oligomers. Mg(2+) serves as cofactor. It depends on Ni(2+) as a cofactor.

The catalysed reaction is a tRNA precursor + 2 CTP + ATP = a tRNA with a 3' CCA end + 3 diphosphate. It catalyses the reaction a tRNA with a 3' CCA end + 2 CTP + ATP = a tRNA with a 3' CCACCA end + 3 diphosphate. Its function is as follows. Catalyzes the addition and repair of the essential 3'-terminal CCA sequence in tRNAs without using a nucleic acid template. Adds these three nucleotides in the order of C, C, and A to the tRNA nucleotide-73, using CTP and ATP as substrates and producing inorganic pyrophosphate. tRNA 3'-terminal CCA addition is required both for tRNA processing and repair. Also involved in tRNA surveillance by mediating tandem CCA addition to generate a CCACCA at the 3' terminus of unstable tRNAs. While stable tRNAs receive only 3'-terminal CCA, unstable tRNAs are marked with CCACCA and rapidly degraded. This Shigella flexneri serotype 5b (strain 8401) protein is Multifunctional CCA protein.